The following is a 331-amino-acid chain: Adenosine deaminase (331 aa).

2 residues coordinate Zn(2+): histidine 12 and histidine 14. Substrate is bound by residues histidine 14, aspartate 16, and glycine 170. Histidine 197 serves as a coordination point for Zn(2+). Catalysis depends on glutamate 200, which acts as the Proton donor. Aspartate 278 contacts Zn(2+). Aspartate 279 is a binding site for substrate.

This sequence belongs to the metallo-dependent hydrolases superfamily. Adenosine and AMP deaminases family. Adenosine deaminase subfamily. The cofactor is Zn(2+).

It catalyses the reaction adenosine + H2O + H(+) = inosine + NH4(+). It carries out the reaction 2'-deoxyadenosine + H2O + H(+) = 2'-deoxyinosine + NH4(+). In terms of biological role, catalyzes the hydrolytic deamination of adenosine and 2-deoxyadenosine. This Shewanella loihica (strain ATCC BAA-1088 / PV-4) protein is Adenosine deaminase.